The primary structure comprises 166 residues: Interferon gamma (166 aa).

Residues 1–23 form the signal peptide; the sequence is MKYTSSFLALLLCVLLGFSGSYG. Position 24 is a pyrrolidone carboxylic acid (Gln24). N-linked (GlcNAc...) asparagine glycans are attached at residues Asn39 and Asn106.

It belongs to the type II (or gamma) interferon family. Homodimer. Interacts with IFNGR1 (via extracellular domain); this interaction promotes IFNGR1 dimerization. In terms of tissue distribution, released primarily from activated T lymphocytes.

The protein resides in the secreted. Type II interferon produced by immune cells such as T-cells and NK cells that plays crucial roles in antimicrobial, antiviral, and antitumor responses by activating effector immune cells and enhancing antigen presentation. Primarily signals through the JAK-STAT pathway after interaction with its receptor IFNGR1 to affect gene regulation. Upon IFNG binding, IFNGR1 intracellular domain opens out to allow association of downstream signaling components JAK2, JAK1 and STAT1, leading to STAT1 activation, nuclear translocation and transcription of IFNG-regulated genes. Many of the induced genes are transcription factors such as IRF1 that are able to further drive regulation of a next wave of transcription. Plays a role in class I antigen presentation pathway by inducing a replacement of catalytic proteasome subunits with immunoproteasome subunits. In turn, increases the quantity, quality, and repertoire of peptides for class I MHC loading. Increases the efficiency of peptide generation also by inducing the expression of activator PA28 that associates with the proteasome and alters its proteolytic cleavage preference. Up-regulates as well MHC II complexes on the cell surface by promoting expression of several key molecules such as cathepsins B/CTSB, H/CTSH, and L/CTSL. Participates in the regulation of hematopoietic stem cells during development and under homeostatic conditions by affecting their development, quiescence, and differentiation. The polypeptide is Interferon gamma (IFNG) (Ovis aries (Sheep)).